We begin with the raw amino-acid sequence, 318 residues long: L-malyl-CoA/beta-methylmalyl-CoA lyase (318 aa).

F19, R24, K30, and R76 together coordinate substrate. Residues E141 and D168 each contribute to the Mg(2+) site. Substrate is bound by residues 167–168 and 251–252; these read AD and IH.

Belongs to the HpcH/HpaI aldolase family. As to quaternary structure, homohexamer. Dimer of trimers. It depends on Mg(2+) as a cofactor. Mn(2+) is required as a cofactor.

The catalysed reaction is (S)-malyl-CoA = glyoxylate + acetyl-CoA. The enzyme catalyses (2R,3S)-beta-methylmalyl-CoA = propanoyl-CoA + glyoxylate. Its function is as follows. Involved in the ethylmalonyl-CoA pathway for acetate assimilation. Catalyzes the reversible condensation of glyoxylate and acetyl-CoA to L-malyl-CoA and the reversible condensation of glyoxylate and propionyl-CoA to yield beta-methylmalyl-CoA. The chain is L-malyl-CoA/beta-methylmalyl-CoA lyase from Cereibacter sphaeroides (strain ATCC 17025 / ATH 2.4.3) (Rhodobacter sphaeroides).